The sequence spans 325 residues: Pyruvate dehydrogenase E1 component subunit beta (325 aa).

Glu59 is a binding site for thiamine diphosphate.

In terms of assembly, heterodimer of an alpha and a beta chain. Requires thiamine diphosphate as cofactor.

It carries out the reaction N(6)-[(R)-lipoyl]-L-lysyl-[protein] + pyruvate + H(+) = N(6)-[(R)-S(8)-acetyldihydrolipoyl]-L-lysyl-[protein] + CO2. In terms of biological role, the pyruvate dehydrogenase complex catalyzes the overall conversion of pyruvate to acetyl-CoA and CO(2). It contains multiple copies of three enzymatic components: pyruvate dehydrogenase (E1), dihydrolipoamide acetyltransferase (E2) and lipoamide dehydrogenase (E3). This chain is Pyruvate dehydrogenase E1 component subunit beta (pdhB), found in Rickettsia bellii (strain RML369-C).